Reading from the N-terminus, the 483-residue chain is tRNA (guanine(37)-N(1))-methyltransferase (483 aa).

A disordered region spans residues 1-24 (MEEAATLQSLSISSSSPFPNNSSP). Positions 9–24 (SLSISSSSPFPNNSSP) are enriched in low complexity. S-adenosyl-L-methionine is bound by residues H252, 290–291 (DL), and N379.

This sequence belongs to the class I-like SAM-binding methyltransferase superfamily. TRM5/TYW2 family. Monomer.

The protein localises to the mitochondrion matrix. Its subcellular location is the nucleus. It localises to the cytoplasm. The enzyme catalyses guanosine(37) in tRNA + S-adenosyl-L-methionine = N(1)-methylguanosine(37) in tRNA + S-adenosyl-L-homocysteine + H(+). Its function is as follows. Specifically methylates the N1 position of guanosine-37 in various cytoplasmic and mitochondrial tRNAs. Methylation is not dependent on the nature of the nucleoside 5' of the target nucleoside. This is the first step in the biosynthesis of wybutosine (yW), a modified base adjacent to the anticodon of tRNAs and required for accurate decoding. The protein is tRNA (guanine(37)-N(1))-methyltransferase of Ajellomyces capsulatus (strain G186AR / H82 / ATCC MYA-2454 / RMSCC 2432) (Darling's disease fungus).